The sequence spans 226 residues: Biosynthetic peptidoglycan transglycosylase (226 aa).

A helical membrane pass occupies residues 5–25; the sequence is IGVTVLAVVGLLLLPYLLTPL.

This sequence belongs to the glycosyltransferase 51 family.

It is found in the cell inner membrane. The catalysed reaction is [GlcNAc-(1-&gt;4)-Mur2Ac(oyl-L-Ala-gamma-D-Glu-L-Lys-D-Ala-D-Ala)](n)-di-trans,octa-cis-undecaprenyl diphosphate + beta-D-GlcNAc-(1-&gt;4)-Mur2Ac(oyl-L-Ala-gamma-D-Glu-L-Lys-D-Ala-D-Ala)-di-trans,octa-cis-undecaprenyl diphosphate = [GlcNAc-(1-&gt;4)-Mur2Ac(oyl-L-Ala-gamma-D-Glu-L-Lys-D-Ala-D-Ala)](n+1)-di-trans,octa-cis-undecaprenyl diphosphate + di-trans,octa-cis-undecaprenyl diphosphate + H(+). Its pathway is cell wall biogenesis; peptidoglycan biosynthesis. In terms of biological role, peptidoglycan polymerase that catalyzes glycan chain elongation from lipid-linked precursors. The chain is Biosynthetic peptidoglycan transglycosylase from Nitrobacter hamburgensis (strain DSM 10229 / NCIMB 13809 / X14).